The chain runs to 166 residues: Small ribosomal subunit protein uS9 (166 aa).

A disordered region spans residues K135–R166. The segment covering R142–K151 has biased composition (basic and acidic residues). A compositionally biased stretch (basic residues) spans Y152–R166.

It belongs to the universal ribosomal protein uS9 family.

In Mycolicibacterium paratuberculosis (strain ATCC BAA-968 / K-10) (Mycobacterium paratuberculosis), this protein is Small ribosomal subunit protein uS9.